The following is a 482-amino-acid chain: Chromosome stability protein 9 (482 aa).

2 disordered regions span residues 239–263 (SSLR…VNKN) and 418–482 (SGLA…RRIR). Over residues 240–249 (SLRNSSKNNN) the composition is skewed to low complexity. The segment covering 250–263 (GTVTPSTSGRVNKN) has biased composition (polar residues). Over residues 418–437 (SGLAFSSSSNSLQQSKLPKS) the composition is skewed to low complexity. Polar residues-rich tracts occupy residues 440 to 453 (LKRS…TNTH) and 463 to 473 (RSSNTVLGSSK).

As to quaternary structure, component of the synapsis initiation complex composed of at least ZIP2, ZIP3, MSH4 and MSH5. Also interacts with ZIP1, MRE11, RAD51 and RAD53.

The protein localises to the nucleus. Its subcellular location is the chromosome. Component of the synapsis initiation complex (SIC) necessary for the synaptonemal complex assembly. Stabilizes the ZIP2 component to the chromosomes. The SIC complex loads onto chromosomes and nucleates ZIP1 polymerization, a molecular zipper that acts to bring homologous chromosomes in close apposition, which is required for meiotic crossover. May also be involved in double strand break repair. The polypeptide is Chromosome stability protein 9 (CST9) (Saccharomyces cerevisiae (strain ATCC 204508 / S288c) (Baker's yeast)).